The sequence spans 329 residues: GTPase Obg (329 aa).

The Obg domain occupies 2–160; the sequence is YNFKDSVSIT…LNVRLELFLV (159 aa). An OBG-type G domain is found at 161–327; it reads ADIGLVGPPN…LIKEFFILAK (167 aa). GTP is bound by residues 167–174, 192–196, 213–216, 280–283, and 308–310; these read GPPNAGKS, FTTKI, DIPG, NKLD, and SIY. Residues S174 and T194 each coordinate Mg(2+).

It belongs to the TRAFAC class OBG-HflX-like GTPase superfamily. OBG GTPase family. As to quaternary structure, monomer. Mg(2+) is required as a cofactor.

It is found in the cytoplasm. Its function is as follows. An essential GTPase which binds GTP, GDP and possibly (p)ppGpp with moderate affinity, with high nucleotide exchange rates and a fairly low GTP hydrolysis rate. Plays a role in control of the cell cycle, stress response, ribosome biogenesis and in those bacteria that undergo differentiation, in morphogenesis control. In Borrelia garinii subsp. bavariensis (strain ATCC BAA-2496 / DSM 23469 / PBi) (Borreliella bavariensis), this protein is GTPase Obg.